The primary structure comprises 199 residues: Ras-related and estrogen-regulated growth inhibitor (199 aa).

GTP is bound by residues 13–20 (GRAGVGKS), 60–64 (DTAGQ), and 118–121 (NKAD).

This sequence belongs to the small GTPase superfamily. Ras family.

The protein localises to the cytoplasm. It catalyses the reaction GTP + H2O = GDP + phosphate + H(+). Its function is as follows. Binds GDP/GTP and possesses intrinsic GTPase activity. Has higher affinity for GDP than for GTP. The polypeptide is Ras-related and estrogen-regulated growth inhibitor (RERG) (Bos taurus (Bovine)).